The chain runs to 130 residues: Anti-adapter protein IraD (130 aa).

This sequence belongs to the GpW/Gp25 family. IraD subfamily. As to quaternary structure, interacts with RssB.

The protein resides in the cytoplasm. Inhibits RpoS proteolysis by regulating RssB activity, thereby increasing the stability of the sigma stress factor RpoS during oxidative stress. Its effect on RpoS stability is due to its interaction with RssB, which probably blocks the interaction of RssB with RpoS, and the consequent delivery of the RssB-RpoS complex to the ClpXP protein degradation pathway. The protein is Anti-adapter protein IraD of Escherichia coli O7:K1 (strain IAI39 / ExPEC).